Reading from the N-terminus, the 666-residue chain is UvrABC system protein B (666 aa).

One can recognise a Helicase ATP-binding domain in the interval 28 to 171; it reads NNINQGIQRQ…YLHVGELIEF (144 aa). 41–48 is an ATP binding site; sequence GATGTGKT. A Beta-hairpin motif is present at residues 94 to 117; the sequence is YFDYYQPEAYKPITDTYIEKDSVT. The 163-residue stretch at 436 to 598 folds into the Helicase C-terminal domain; that stretch reads QIDDLINELM…IIPKTIIKPI (163 aa). A UVR domain is found at 624–659; sequence NQKIKELKKKMEEAAKKREYEVAAQYRDMIVELEAI.

The protein belongs to the UvrB family. In terms of assembly, forms a heterotetramer with UvrA during the search for lesions. Interacts with UvrC in an incision complex.

The protein localises to the cytoplasm. The UvrABC repair system catalyzes the recognition and processing of DNA lesions. A damage recognition complex composed of 2 UvrA and 2 UvrB subunits scans DNA for abnormalities. Upon binding of the UvrA(2)B(2) complex to a putative damaged site, the DNA wraps around one UvrB monomer. DNA wrap is dependent on ATP binding by UvrB and probably causes local melting of the DNA helix, facilitating insertion of UvrB beta-hairpin between the DNA strands. Then UvrB probes one DNA strand for the presence of a lesion. If a lesion is found the UvrA subunits dissociate and the UvrB-DNA preincision complex is formed. This complex is subsequently bound by UvrC and the second UvrB is released. If no lesion is found, the DNA wraps around the other UvrB subunit that will check the other stand for damage. The polypeptide is UvrABC system protein B (Ureaplasma parvum serovar 3 (strain ATCC 27815 / 27 / NCTC 11736)).